Consider the following 596-residue polypeptide: Ulvan-active sulfatase (596 aa).

Residues 1-27 (MLFLRFKFFNNRLLFVSVLCFVICVSC) form the signal peptide. Glu58, Asp59, Cys97, Asp306, and His307 together coordinate Ca(2+). Cys97 (nucleophile) is an active-site residue. 3-oxoalanine (Cys) is present on Cys97.

Belongs to the sulfatase family. The cofactor is Ca(2+). The conversion to 3-oxoalanine (also known as C-formylglycine, FGly), of a serine or cysteine residue in prokaryotes and of a cysteine residue in eukaryotes, is critical for catalytic activity.

Its subcellular location is the periplasm. Its function is as follows. Sulfatase involved in ulvan degradation. Ulvan is the main polysaccharide component of the Ulvales (green seaweed) cell wall. It is composed of disaccharide building blocks comprising 3-sulfated rhamnose (Rha3S) linked to D-glucuronic acid (GlcA), L-iduronic acid (IduA), or D-xylose (Xyl). The sulfatase desulfates Xyl2S-Rha3S, product of the degradation of ulvan by endo-acting alpha-1,4-L-rhamnosidase, to Xyl-Rha3S. The sequence is that of Ulvan-active sulfatase from Formosa agariphila (strain DSM 15362 / KCTC 12365 / LMG 23005 / KMM 3901 / M-2Alg 35-1).